Here is a 160-residue protein sequence, read N- to C-terminus: Small ribosomal subunit protein uS9 (160 aa).

It belongs to the universal ribosomal protein uS9 family.

The polypeptide is Small ribosomal subunit protein uS9 (Xanthobacter autotrophicus (strain ATCC BAA-1158 / Py2)).